The chain runs to 108 residues: MKTKLRKNDEVIVIAGSYKGTKGTILKVLPKQQRVQVKGVNVVTKHVKPSQSNSEGSIQNFEAPIHISNVAYVHKSGPKDKSGIASKISYEKRKDKKVRIARKTGKVI.

Belongs to the universal ribosomal protein uL24 family. As to quaternary structure, part of the 50S ribosomal subunit.

Its function is as follows. One of two assembly initiator proteins, it binds directly to the 5'-end of the 23S rRNA, where it nucleates assembly of the 50S subunit. In terms of biological role, one of the proteins that surrounds the polypeptide exit tunnel on the outside of the subunit. This chain is Large ribosomal subunit protein uL24, found in Mycoplasmopsis pulmonis (strain UAB CTIP) (Mycoplasma pulmonis).